A 234-amino-acid polypeptide reads, in one-letter code: Purine nucleoside phosphorylase DeoD-type (234 aa).

His-5 lines the a purine D-ribonucleoside pocket. Phosphate is bound by residues Gly-21, Arg-25, Arg-44, and Arg-88 to Thr-91. Residues Asp-180–Glu-182 and Ser-204–Asp-205 contribute to the a purine D-ribonucleoside site. The active-site Proton donor is the Asp-205.

The protein belongs to the PNP/UDP phosphorylase family. In terms of assembly, homohexamer; trimer of homodimers.

The enzyme catalyses a purine D-ribonucleoside + phosphate = a purine nucleobase + alpha-D-ribose 1-phosphate. It carries out the reaction a purine 2'-deoxy-D-ribonucleoside + phosphate = a purine nucleobase + 2-deoxy-alpha-D-ribose 1-phosphate. Functionally, catalyzes the reversible phosphorolytic breakdown of the N-glycosidic bond in the beta-(deoxy)ribonucleoside molecules, with the formation of the corresponding free purine bases and pentose-1-phosphate. The chain is Purine nucleoside phosphorylase DeoD-type from Buchnera aphidicola subsp. Acyrthosiphon pisum (strain 5A).